Consider the following 72-residue polypeptide: Translation initiation factor IF-1 (72 aa).

The S1-like domain occupies 1–72; that stretch reads MSKEEAIEVE…TRGRITYRAK (72 aa).

It belongs to the IF-1 family. As to quaternary structure, component of the 30S ribosomal translation pre-initiation complex which assembles on the 30S ribosome in the order IF-2 and IF-3, IF-1 and N-formylmethionyl-tRNA(fMet); mRNA recruitment can occur at any time during PIC assembly.

It is found in the cytoplasm. Functionally, one of the essential components for the initiation of protein synthesis. Stabilizes the binding of IF-2 and IF-3 on the 30S subunit to which N-formylmethionyl-tRNA(fMet) subsequently binds. Helps modulate mRNA selection, yielding the 30S pre-initiation complex (PIC). Upon addition of the 50S ribosomal subunit IF-1, IF-2 and IF-3 are released leaving the mature 70S translation initiation complex. The chain is Translation initiation factor IF-1 from Geobacter sulfurreducens (strain ATCC 51573 / DSM 12127 / PCA).